A 163-amino-acid chain; its full sequence is Disulfide bond formation protein B 1 (163 aa).

Over 1-9 (MPLASPRQL) the chain is Cytoplasmic. Residues 10–26 (FLLAFLACVAIMGGALY) traverse the membrane as a helical segment. Topologically, residues 27 to 44 (LEHVVGLEACPLCVVQRI) are periplasmic. An intrachain disulfide couples cysteine 36 to cysteine 39. Residues 45–61 (FFILIGLTCLAGAIQGP) form a helical membrane-spanning segment. At 62–67 (GLRGRR) the chain is on the cytoplasmic side. A helical membrane pass occupies residues 68–85 (IYSVLVFLLALGGGATAA). Residues 86-142 (RQVWLQTVPLDQLPACLPSLDYMMQALPFQEVIRLVLHGTADCAQVSWTLFTLSIPE) lie on the Periplasmic side of the membrane. A disulfide bond links cysteine 101 and cysteine 128. A helical membrane pass occupies residues 143–161 (WSLLAFVAYLGFSIVQFLR). Topologically, residues 162-163 (RA) are cytoplasmic.

This sequence belongs to the DsbB family.

It is found in the cell inner membrane. Required for disulfide bond formation in some periplasmic proteins. Acts by oxidizing the DsbA protein. This is Disulfide bond formation protein B 1 (dsbB1) from Pseudomonas aeruginosa (strain ATCC 15692 / DSM 22644 / CIP 104116 / JCM 14847 / LMG 12228 / 1C / PRS 101 / PAO1).